A 360-amino-acid polypeptide reads, in one-letter code: Phospho-N-acetylmuramoyl-pentapeptide-transferase (360 aa).

The next 10 membrane-spanning stretches (helical) occupy residues 25–45 (RGILGVLTALSLALCLGPWMI), 73–93 (TMGGALILSAIGISTLLWADL), 97–117 (YVWVVLLVTLAFGAIGWVDDY), 132–152 (WKYFWQSVFGLGAAIFLYMTA), 168–188 (VSIPLGIGFVVLTYFVIVGSS), 199–219 (GLAIMPTVMVGGALGIFCYLS), 236–256 (AGELIVFCGALIGAGLGFLWF), 263–283 (VFMGDVGALALGAALGTIAVI), 288–308 (IVLFIMGGVFVMETLSVVIQV), and 338–358 (VIVRFWIITVILVLIGLATLK).

The protein belongs to the glycosyltransferase 4 family. MraY subfamily. Requires Mg(2+) as cofactor.

The protein resides in the cell inner membrane. The catalysed reaction is UDP-N-acetyl-alpha-D-muramoyl-L-alanyl-gamma-D-glutamyl-meso-2,6-diaminopimeloyl-D-alanyl-D-alanine + di-trans,octa-cis-undecaprenyl phosphate = di-trans,octa-cis-undecaprenyl diphospho-N-acetyl-alpha-D-muramoyl-L-alanyl-D-glutamyl-meso-2,6-diaminopimeloyl-D-alanyl-D-alanine + UMP. It participates in cell wall biogenesis; peptidoglycan biosynthesis. Functionally, catalyzes the initial step of the lipid cycle reactions in the biosynthesis of the cell wall peptidoglycan: transfers peptidoglycan precursor phospho-MurNAc-pentapeptide from UDP-MurNAc-pentapeptide onto the lipid carrier undecaprenyl phosphate, yielding undecaprenyl-pyrophosphoryl-MurNAc-pentapeptide, known as lipid I. The polypeptide is Phospho-N-acetylmuramoyl-pentapeptide-transferase (Pseudomonas fluorescens (strain ATCC BAA-477 / NRRL B-23932 / Pf-5)).